Reading from the N-terminus, the 141-residue chain is Hemoglobin subunit alpha (141 aa).

The Globin domain maps to 1 to 141 (VLSSADKNNI…VSTVLTSKYR (141 aa)). At S3 the chain carries Phosphoserine. N6-succinyllysine occurs at positions 7 and 11. K16 is modified (N6-acetyllysine; alternate). The residue at position 16 (K16) is an N6-succinyllysine; alternate. A Phosphotyrosine modification is found at Y24. Phosphoserine is present on S35. K40 bears the N6-succinyllysine mark. S49 carries the phosphoserine modification. An O2-binding site is contributed by H58. H87 is a heme b binding site. S102 is modified (phosphoserine). A phosphothreonine mark is found at T108, T134, and T137. At S138 the chain carries Phosphoserine.

This sequence belongs to the globin family. In terms of assembly, heterotetramer of two alpha chains and two beta chains. As to expression, red blood cells.

Its function is as follows. Involved in oxygen transport from the lung to the various peripheral tissues. In terms of biological role, hemopressin acts as an antagonist peptide of the cannabinoid receptor CNR1. Hemopressin-binding efficiently blocks cannabinoid receptor CNR1 and subsequent signaling. The chain is Hemoglobin subunit alpha (HBA) from Paguma larvata (Masked palm civet).